The primary structure comprises 595 residues: Aspartate--tRNA(Asp/Asn) ligase (595 aa).

E175 lines the L-aspartate pocket. The segment at 199 to 202 (QQYK) is aspartate. The L-aspartate site is built by R221 and H454. An ATP-binding site is contributed by 221-223 (RDE). E488 lines the ATP pocket. L-aspartate is bound at residue R495. ATP is bound at residue 540 to 543 (GIDR).

It belongs to the class-II aminoacyl-tRNA synthetase family. Type 1 subfamily. Homodimer.

Its subcellular location is the cytoplasm. The catalysed reaction is tRNA(Asx) + L-aspartate + ATP = L-aspartyl-tRNA(Asx) + AMP + diphosphate. In terms of biological role, aspartyl-tRNA synthetase with relaxed tRNA specificity since it is able to aspartylate not only its cognate tRNA(Asp) but also tRNA(Asn). Reaction proceeds in two steps: L-aspartate is first activated by ATP to form Asp-AMP and then transferred to the acceptor end of tRNA(Asp/Asn). The polypeptide is Aspartate--tRNA(Asp/Asn) ligase (Agrobacterium fabrum (strain C58 / ATCC 33970) (Agrobacterium tumefaciens (strain C58))).